We begin with the raw amino-acid sequence, 335 residues long: Pyridoxal 5'-phosphate synthase subunit PdxS (335 aa).

Asp-30 serves as a coordination point for D-ribose 5-phosphate. Catalysis depends on Lys-87, which acts as the Schiff-base intermediate with D-ribose 5-phosphate. Residue Gly-159 participates in D-ribose 5-phosphate binding. Residue Arg-171 coordinates D-glyceraldehyde 3-phosphate. D-ribose 5-phosphate is bound by residues Gly-257 and 278–279; that span reads GS.

Belongs to the PdxS/SNZ family. As to quaternary structure, in the presence of PdxT, forms a dodecamer of heterodimers.

It carries out the reaction aldehydo-D-ribose 5-phosphate + D-glyceraldehyde 3-phosphate + L-glutamine = pyridoxal 5'-phosphate + L-glutamate + phosphate + 3 H2O + H(+). The protein operates within cofactor biosynthesis; pyridoxal 5'-phosphate biosynthesis. In terms of biological role, catalyzes the formation of pyridoxal 5'-phosphate from ribose 5-phosphate (RBP), glyceraldehyde 3-phosphate (G3P) and ammonia. The ammonia is provided by the PdxT subunit. Can also use ribulose 5-phosphate and dihydroxyacetone phosphate as substrates, resulting from enzyme-catalyzed isomerization of RBP and G3P, respectively. This Thermococcus onnurineus (strain NA1) protein is Pyridoxal 5'-phosphate synthase subunit PdxS.